The sequence spans 286 residues: D-tagatose-1,6-bisphosphate aldolase subunit KbaY (286 aa).

The active-site Proton donor is aspartate 82. Zn(2+) contacts are provided by histidine 83 and histidine 180. Glycine 181 contacts dihydroxyacetone phosphate. Histidine 208 is a Zn(2+) binding site. Dihydroxyacetone phosphate contacts are provided by residues glycine 209–serine 211 and asparagine 230–threonine 233.

Belongs to the class II fructose-bisphosphate aldolase family. TagBP aldolase KbaY subfamily. Homotetramer. Forms a complex with KbaZ. Zn(2+) is required as a cofactor.

The enzyme catalyses D-tagatofuranose 1,6-bisphosphate = D-glyceraldehyde 3-phosphate + dihydroxyacetone phosphate. It participates in carbohydrate metabolism; D-tagatose 6-phosphate degradation; D-glyceraldehyde 3-phosphate and glycerone phosphate from D-tagatose 6-phosphate: step 2/2. Its function is as follows. Catalytic subunit of the tagatose-1,6-bisphosphate aldolase KbaYZ, which catalyzes the reversible aldol condensation of dihydroxyacetone phosphate (DHAP or glycerone-phosphate) with glyceraldehyde 3-phosphate (G3P) to produce tagatose 1,6-bisphosphate (TBP). Requires KbaZ subunit for full activity and stability. The polypeptide is D-tagatose-1,6-bisphosphate aldolase subunit KbaY (Escherichia coli O45:K1 (strain S88 / ExPEC)).